The chain runs to 219 residues: UPF0173 metal-dependent hydrolase Mhun_1705 (219 aa).

This sequence belongs to the UPF0173 family.

This Methanospirillum hungatei JF-1 (strain ATCC 27890 / DSM 864 / NBRC 100397 / JF-1) protein is UPF0173 metal-dependent hydrolase Mhun_1705.